Here is an 862-residue protein sequence, read N- to C-terminus: Rab GTPase-binding effector protein 1 (862 aa).

Position 2 is an N-acetylalanine (alanine 2). Positions 11–345 (DVSLQQRVAE…KKADVEEEIK (335 aa)) form a coiled coil. The residue at position 282 (lysine 282) is an N6-acetyllysine. Residues 315–338 (ELKKKDQEDDEQQRLNKRKDHKKA) are disordered. 3 positions are modified to phosphoserine: serine 374, serine 377, and serine 407. Threonine 408 is modified (phosphothreonine). Phosphoserine is present on serine 410. The segment at 435–447 (DESDFGPLVGADS) is interaction with AP1G1, AP1G2, GGA1, GGA2 and GGA3. A coiled-coil region spans residues 534-816 (DMCSNYEKQL…LQTELDVSEQ (283 aa)).

Belongs to the rabaptin family. As to quaternary structure, homodimer when bound to RAB5A. Heterodimer with RABGEF1. The heterodimer binds RAB4A and RAB5A that have been activated by GTP-binding. Interacts with TSC2. Interacts with GGA1 (via GAE domain), GGA2 (via GAE domain) and GGA3 (via GAE domain). Interacts with AP1G1 (via GAE domain). Interacts with AP1G2 (via GAE domain). Interacts with ECPAS. Interacts with KCNH1. Interacts with PKD1 (via C-terminal domain) and GGA1; the interactions recruit PKD1:PKD2 complex to GGA1 and ARL3 at trans-Golgi network. In terms of processing, proteolytic cleavage by caspases in apoptotic cells causes loss of endosome fusion activity.

The protein resides in the cytoplasm. The protein localises to the early endosome. It localises to the recycling endosome. Its subcellular location is the cytoplasmic vesicle. In terms of biological role, rab effector protein acting as linker between gamma-adaptin, RAB4A and RAB5A. Involved in endocytic membrane fusion and membrane trafficking of recycling endosomes. Involved in KCNH1 channels trafficking to and from the cell membrane. Stimulates RABGEF1 mediated nucleotide exchange on RAB5A. Mediates the traffic of PKD1:PKD2 complex from the endoplasmic reticulum through the Golgi to the cilium. This chain is Rab GTPase-binding effector protein 1 (RABEP1), found in Homo sapiens (Human).